The chain runs to 167 residues: Alpha-crystallin A chain (167 aa).

Position 1 is an N-acetylmethionine (Met-1). The region spanning 47–158 (YYRQSFFRGF…GERPIPVSRE (112 aa)) is the sHSP domain. His-94, Glu-96, His-101, and His-148 together coordinate Zn(2+). The tract at residues 143-167 (SLDSSHGERPIPVSREEKPTSAPSS) is disordered. Residues 147–161 (SHGERPIPVSREEKP) show a composition bias toward basic and acidic residues. Residue Ser-156 is glycosylated (O-linked (GlcNAc) serine).

The protein belongs to the small heat shock protein (HSP20) family. In terms of assembly, heteropolymer composed of three CRYAA and one CRYAB subunits. Inter-subunit bridging via zinc ions enhances stability, which is crucial as there is no protein turn over in the lens. Can also form homodimers and homotetramers (dimers of dimers) which serve as the building blocks of homooligomers. Within homooligomers, the zinc-binding motif is created from residues of 3 different molecules. His-94 and Glu-96 from one molecule are ligands of the zinc ion, and His-101 and His-148 residues from additional molecules complete the site with tetrahedral coordination geometry.

It is found in the cytoplasm. The protein localises to the nucleus. Functionally, contributes to the transparency and refractive index of the lens. May act as a chaperone, preventing aggregation of various proteins under a wide range of stress conditions. In Pelophylax lessonae (Pool frog), this protein is Alpha-crystallin A chain (CRYAA).